We begin with the raw amino-acid sequence, 650 residues long: Macrolide export ATP-binding/permease protein MacB (650 aa).

The 237-residue stretch at 2-238 (IDIKGIRKSY…PTTAQEKRQE (237 aa)) folds into the ABC transporter domain. 38-45 (GPSGSGKS) serves as a coordination point for ATP. 4 consecutive transmembrane segments (helical) span residues 267 to 287 (GLSM…LALG), 531 to 551 (IAAI…LVSV), 580 to 600 (IVVS…FSLL), and 610 to 630 (VVSA…GIVF).

Belongs to the ABC transporter superfamily. Macrolide exporter (TC 3.A.1.122) family. Homodimer.

It is found in the cell inner membrane. Non-canonical ABC transporter that contains transmembrane domains (TMD), which form a pore in the inner membrane, and an ATP-binding domain (NBD), which is responsible for energy generation. Confers resistance against macrolides. The sequence is that of Macrolide export ATP-binding/permease protein MacB from Bdellovibrio bacteriovorus (strain ATCC 15356 / DSM 50701 / NCIMB 9529 / HD100).